Consider the following 458-residue polypeptide: Probable beta-eliminating lyase (458 aa).

Lysine 257 carries the N6-(pyridoxal phosphate)lysine modification.

The protein belongs to the beta-eliminating lyase family. It depends on pyridoxal 5'-phosphate as a cofactor.

The sequence is that of Probable beta-eliminating lyase from Trichomonas vaginalis (strain ATCC PRA-98 / G3).